The chain runs to 427 residues: D-inositol 3-phosphate glycosyltransferase 2 (427 aa).

Histidine 14 contributes to the 1D-myo-inositol 3-phosphate binding site. Residues 20-21 (QP) and glycine 28 contribute to the UDP-N-acetyl-alpha-D-glucosamine site. 1D-myo-inositol 3-phosphate contacts are provided by residues 25-30 (DAGGMN), lysine 83, tyrosine 116, threonine 140, and arginine 160. Arginine 234, lysine 239, and valine 300 together coordinate UDP-N-acetyl-alpha-D-glucosamine. Mg(2+)-binding residues include tyrosine 309, arginine 310, and alanine 312. Positions 322 and 330 each coordinate UDP-N-acetyl-alpha-D-glucosamine. Position 336 (threonine 336) interacts with Mg(2+).

It belongs to the glycosyltransferase group 1 family. MshA subfamily. Homodimer.

The enzyme catalyses 1D-myo-inositol 3-phosphate + UDP-N-acetyl-alpha-D-glucosamine = 1D-myo-inositol 2-acetamido-2-deoxy-alpha-D-glucopyranoside 3-phosphate + UDP + H(+). Catalyzes the transfer of a N-acetyl-glucosamine moiety to 1D-myo-inositol 3-phosphate to produce 1D-myo-inositol 2-acetamido-2-deoxy-glucopyranoside 3-phosphate in the mycothiol biosynthesis pathway. This chain is D-inositol 3-phosphate glycosyltransferase 2, found in Catenulispora acidiphila (strain DSM 44928 / JCM 14897 / NBRC 102108 / NRRL B-24433 / ID139908).